Consider the following 196-residue polypeptide: Large ribosomal subunit protein bL9 (196 aa).

It belongs to the bacterial ribosomal protein bL9 family.

Binds to the 23S rRNA. This chain is Large ribosomal subunit protein bL9, found in Bradyrhizobium sp. (strain ORS 278).